We begin with the raw amino-acid sequence, 371 residues long: MSEQKRTPIFTEYASHGAKTIDFGGWDLPVQFSSIKHEHEVTRTKAGLFDVSHMGEISVKGPKSESFLQYVLTNDISKLEPGKAQYTIMCYEDGGTVDDLIVYKLDDEDYLLVVNAANTEKDANWIKQKNTYSNDEIVIEDVSNQYVQLAIQGPKAVEILQKCTDENVQEIKFFRFKNNVALKGIEAKALISRTGYTGEDGFEIYIDASSGVALWKLLLEKGEANGLEPIGLGARDTLRFEANLALYGQELSKDISPIEAGLGFAVKVNKGPDFIGKEVLKNQVENGTDRKLVGIEMIDKGIPRHEYEVLKDNKEIGFITSGTQSPTLNKNVGLALINISYTEIGTEVDVKVRKRILKAKIVPTPFYKRGR.

It belongs to the GcvT family. In terms of assembly, the glycine cleavage system is composed of four proteins: P, T, L and H.

The enzyme catalyses N(6)-[(R)-S(8)-aminomethyldihydrolipoyl]-L-lysyl-[protein] + (6S)-5,6,7,8-tetrahydrofolate = N(6)-[(R)-dihydrolipoyl]-L-lysyl-[protein] + (6R)-5,10-methylene-5,6,7,8-tetrahydrofolate + NH4(+). The glycine cleavage system catalyzes the degradation of glycine. The chain is Aminomethyltransferase from Oceanobacillus iheyensis (strain DSM 14371 / CIP 107618 / JCM 11309 / KCTC 3954 / HTE831).